The primary structure comprises 127 residues: Putative B3 domain-containing protein At4g12617 (127 aa).

Residues Ile35–Ala127 constitute a DNA-binding region (TF-B3).

Its subcellular location is the nucleus. The protein is Putative B3 domain-containing protein At4g12617 of Arabidopsis thaliana (Mouse-ear cress).